A 164-amino-acid chain; its full sequence is E3 ubiquitin ligase complex SCF subunit sconC (164 aa).

The tract at residues 106-164 is interaction with the F-box domain of F-box proteins; that stretch reads ILAANYLDIKALLDVGCKTVANMIKGKSPEEIRKTFNIQNDFTPEEEDQIRRENEWAEE.

This sequence belongs to the SKP1 family. Component of the SCF (SKP1-CUL1-F-box protein) E3 ubiquitin ligase complexes.

It participates in protein modification; protein ubiquitination. Essential component of the SCF (SKP1-CUL1-F-box protein) E3 ubiquitin ligase complexes, which mediate the ubiquitination and subsequent proteasomal degradation of target proteins. Controls sulfur metabolite repression, probably by mediating the inactivation or degradation of the metR transcription factor. The sequence is that of E3 ubiquitin ligase complex SCF subunit sconC (sconC) from Arthroderma benhamiae (strain ATCC MYA-4681 / CBS 112371) (Trichophyton mentagrophytes).